Here is a 692-residue protein sequence, read N- to C-terminus: MNRVILKDSKIFLNVLNKPIIKNKNCLSLLNITTSSTTSIIKNQQINQFNKRNFTNTINNNKNENINNKILNIIERSHSCGEITSKDIGKEVIIYGWINSLRNLGDNVFLVIRDGHGKVQCYVDLKQQCILKSSVPNIDINERNSIEENIKLFKLESIVSIKGKVIARPERMVNKNMSTGEIEISVDQLQLLNNCVDLPFTVEHDSTAVSEELRLKYRYVDLRRDKVQSNIRLRSKVAMAARNYLINQQFIEVETPTLFRPTPEGAREYLVPTRHQGQFYSLPQSPQQYKQLLMVGGIDRYFQLARCYRDEDLRSDRQPEFTQIDMELSFVNTQMIYRIIEGLVKTLWKEAGFNIDYEFPFYTYEQVLSTYGIDKPDTRYDMKLVDITDCFNKDETNINLFKNALSQASNNFKESKPVIKCIKLDQVLPTLKSKHLDQITTESNSIITVQIKSNNEWKSLISKSISEQEKTLITERMNLKEGDVLLISVGPRFQVESTLGKTRIYCANLLKELNLLKLDPQQFNFLWVVDFPLFTPSDYMNEQSALLSTHHPFTAPHPEDIDLLLNPLSTPSDYSKIRGQHYDIVINGVELGGGSIRIHNSDVQLRVLEKVLKLEPHMVQRFNHLLTALSMGCPPHGGIALGFDRLCSLLVNSNSIRDVIAFPKTSGGKELMTSSPATVTKSELDELFLIQK.

A mitochondrion-targeting transit peptide spans Met-1–Asn-61. Glu-264 serves as a coordination point for L-aspartate. The segment at Gln-287–Lys-290 is aspartate. Arg-309 contributes to the L-aspartate binding site. ATP is bound by residues Arg-309 to Glu-311 and Glu-590. Residue Arg-597 participates in L-aspartate binding. Residue Gly-642–Arg-645 coordinates ATP.

It belongs to the class-II aminoacyl-tRNA synthetase family. Type 1 subfamily.

The protein localises to the mitochondrion matrix. The enzyme catalyses tRNA(Asp) + L-aspartate + ATP = L-aspartyl-tRNA(Asp) + AMP + diphosphate. The chain is Aspartate--tRNA ligase, mitochondrial (maspS) from Dictyostelium discoideum (Social amoeba).